Reading from the N-terminus, the 357-residue chain is Palmitoyltransferase ZDHHC20-A (357 aa).

Topologically, residues 1 to 14 (MAPSHAVRCCQRGL) are cytoplasmic. A helical transmembrane segment spans residues 15 to 35 (SWIPVIFINLVVCWSYYAYVV). At 36 to 50 (ELCIYTIPNVNEQVI) the chain is on the lumenal side. A helical membrane pass occupies residues 51-71 (YLVVFHAFFFMFMWSYWKTIS). Over 72–166 (SKPTNPSKEF…NNCVGFSNYK (95 aa)) the chain is Cytoplasmic. Positions 123 to 173 (RYCDRCQLIKPDRCHHCSTCDKCVLKMDHHCPWVNNCVGFSNYKFFVLFLA) constitute a DHHC domain. Cys153 functions as the S-palmitoyl cysteine intermediate in the catalytic mechanism. A helical transmembrane segment spans residues 167–187 (FFVLFLAYSMLYCVYIAATVL). At 188-204 (QYFIKFWTNQLPDTHAK) the chain is on the lumenal side. Residues 205-228 (FHVLFLFFVAAMFFISILSLFSYH) traverse the membrane as a helical segment. The Cytoplasmic portion of the chain corresponds to 229-357 (LWLVGKNRTT…PVCVTLENES (129 aa)).

The protein belongs to the DHHC palmitoyltransferase family.

It localises to the golgi apparatus membrane. It is found in the cell membrane. Its subcellular location is the cytoplasm. The protein resides in the perinuclear region. The protein localises to the endoplasmic reticulum membrane. It localises to the endoplasmic reticulum-Golgi intermediate compartment membrane. It catalyses the reaction L-cysteinyl-[protein] + hexadecanoyl-CoA = S-hexadecanoyl-L-cysteinyl-[protein] + CoA. The catalysed reaction is L-cysteinyl-[protein] + tetradecanoyl-CoA = S-tetradecanoyl-L-cysteinyl-[protein] + CoA. It carries out the reaction L-cysteinyl-[protein] + octadecanoyl-CoA = S-octadecanoyl-L-cysteinyl-[protein] + CoA. In terms of biological role, palmitoyltransferase that could catalyze the addition of palmitate onto various protein substrates. Catalyzes palmitoylation of Cys residues on protein substrates and has a preference for acyl-CoA with C16 fatty acid chains but may also utilize acyl-CoA with C14 and C18 fatty acid chains. The sequence is that of Palmitoyltransferase ZDHHC20-A from Danio rerio (Zebrafish).